The sequence spans 467 residues: ADAM DEC1 (467 aa).

The first 33 residues, Met-1–Ala-33, serve as a signal peptide directing secretion. Residues Thr-34 to Pro-208 constitute a propeptide that is removed on maturation. Asn-61 and Asn-236 each carry an N-linked (GlcNAc...) asparagine glycan. In terms of domain architecture, Peptidase M12B spans Lys-217 to Pro-411. Disulfide bonds link Cys-327–Cys-406 and Cys-368–Cys-373. Zn(2+) is bound at residue His-351. Residue Glu-352 is part of the active site. 2 residues coordinate Zn(2+): His-355 and Asp-361. One can recognise a Disintegrin domain in the interval Lys-418 to Glu-467.

Zn(2+) is required as a cofactor. Expressed highly in uterus during pregnancy.

It localises to the secreted. In terms of biological role, may play an important role in the control of the immune response and during pregnancy. The chain is ADAM DEC1 (Adamdec1) from Mus musculus (Mouse).